The sequence spans 2563 residues: Compactin diketide synthase mlcB (2563 aa).

In terms of domain architecture, Ketosynthase family 3 (KS3) spans 29-450 (STPIAIVGMG…GSNAHVILES (422 aa)). Catalysis depends on for beta-ketoacyl synthase activity residues C202, H337, and H372. Residues 568–915 (VFTGQGAQWH…TELISKGYGL (348 aa)) form an acyl and malonyl transferase region. The active-site For malonyltransferase activity is the S658. The segment covering 951-960 (EPRGSRESKQ) has biased composition (basic and acidic residues). A disordered region spans residues 951–971 (EPRGSRESKQRTHPPHTLIGS). An N-terminal hotdog fold region spans residues 966-1103 (HTLIGSRESL…GLIRSESERS (138 aa)). One can recognise a PKS/mFAS DH domain in the interval 966–1284 (HTLIGSRESL…FQSVGSSFSD (319 aa)). The active-site Proton acceptor; for dehydratase activity is the H998. Residues 998-1010 (HVVGSSIIFPGAG) form a dehydratase-like region. A C-terminal hotdog fold region spans residues 1121–1284 (DNRSIDPNDL…FQSVGSSFSD (164 aa)). D1187 functions as the Proton donor; for dehydratase activity in the catalytic mechanism. The segment at 1542-1579 (YDVVVACQVLHATRCMKRTLSNVRKLLKPGGNLILVET) is methyltransferase. The 78-residue stretch at 2485–2562 (EAISIVLKAM…GLVELVVAKC (78 aa)) folds into the Carrier domain. S2522 bears the O-(pantetheine 4'-phosphoryl)serine mark.

The cofactor is pantetheine 4'-phosphate.

It carries out the reaction holo-[2-methylbutanoate polyketide synthase] + 2 malonyl-CoA + S-adenosyl-L-methionine + 2 NADPH + 3 H(+) = (S)-2-methylbutanoyl-[2-methylbutanoate polyketide synthase] + S-adenosyl-L-homocysteine + 2 CO2 + 2 NADP(+) + 2 CoA + H2O. It functions in the pathway polyketide biosynthesis. In terms of biological role, diketide synthase; part of the gene cluster that mediates the biosynthesis of compactin, also known as mevastatin or ML-236B, and which acts as a potent competitive inhibitor of HMG-CoA reductase. Compactin biosynthesis is performed in two stages. The first stage is catalyzed by the nonaketide synthase mlcA, which belongs to type I polyketide synthases and catalyzes the iterative nine-step formation of the polyketide. This PKS stage is completed by the action of dehydrogenase mlcG, which catalyzes the NADPH-dependent reduction of the unsaturated tetra-, penta- and heptaketide intermediates that arise during the mlcA-mediated biosynthesis of the nonaketide chain and leads to dihydro-ML-236C carboxylate. Covalently bound dihydro-ML-236C carboxylate is released from mlcA by the mlcF esterase. Conversion of dihydro-ML-236C carboxylate into ML-236A carboxylate is subsequently performed with the participation of molecular oxygen and P450 monoogygenase mlcC. Finally, mlcH performs the conversion of ML-236A carboxylate to ML-236B/compactin carboxylate through the addition of the side-chain diketide moiety produced by the diketide synthase mlcB. The sequence is that of Compactin diketide synthase mlcB (mlcB) from Penicillium citrinum.